The following is a 260-amino-acid chain: CD320 antigen (260 aa).

Positions 1-28 (MARGGAGRAVALGLVLRLLFGLRTGLEA) are cleaved as a signal peptide. At 29–208 (APAPAHTRVQ…DSSRNPSAYG (180 aa)) the chain is on the extracellular side. Residues 46-83 (SCPTDTFQCLTSGYCVPLSWRCDGDQDCSDGSDEEDCR) form the LDL-receptor class A 1 domain. 3 cysteine pairs are disulfide-bonded: Cys47/Cys60, Cys54/Cys73, and Cys67/Cys82. Residues Trp65, Asp68, Asp70, Asp72, Asp78, and Glu79 each contribute to the Ca(2+) site. Asn118 carries an N-linked (GlcNAc...) asparagine glycan. In terms of domain architecture, LDL-receptor class A 2 spans 123–160 (PCQESELHCILDDVCIPHTWRCDGHPDCLDSSDELSCD). 3 disulfides stabilise this stretch: Cys124-Cys137, Cys131-Cys150, and Cys144-Cys159. Ca(2+) contacts are provided by Trp142, Asp145, His147, Asp149, Asp155, and Glu156. N-linked (GlcNAc...) asparagine glycosylation occurs at Asn185. Residues 209-229 (VIAAAGVLSAILVSATLLILL) form a helical membrane-spanning segment. Topologically, residues 230–260 (RLRGQGYLPPPGLLVAVKESLLLSERKTSLI) are cytoplasmic.

In terms of assembly, interacts (via LDL-receptor class A domains) with TCN2.

Its subcellular location is the cell membrane. Functionally, receptor for transcobalamin saturated with cobalamin (TCbl). Plays an important role in cobalamin uptake. Plasma membrane protein that is expressed on follicular dendritic cells (FDC) and mediates interaction with germinal center B cells. Functions as a costimulator to promote B cell responses to antigenic stimuli; promotes B cell differentiation and proliferation. Germinal center-B (GC-B) cells differentiate into memory B-cells and plasma cells (PC) through interaction with T-cells and follicular dendritic cells (FDC). CD320 augments the proliferation of PC precursors generated by IL-10. In Mus musculus (Mouse), this protein is CD320 antigen (Cd320).